Here is a 155-residue protein sequence, read N- to C-terminus: Regulatory protein RecX (155 aa).

This sequence belongs to the RecX family.

The protein resides in the cytoplasm. Its function is as follows. Modulates RecA activity. The protein is Regulatory protein RecX of Vibrio parahaemolyticus serotype O3:K6 (strain RIMD 2210633).